The sequence spans 501 residues: GMP synthase [glutamine-hydrolyzing] (501 aa).

Residues 1–185 (MVLVVDYGSQ…LFNVCKLEKN (185 aa)) form the Glutamine amidotransferase type-1 domain. The Nucleophile role is filled by C75. Catalysis depends on residues H159 and E161. The GMPS ATP-PPase domain maps to 186–376 (WKIGDLVEEK…LGIPDRIINR (191 aa)). 213–219 (SGGVDSS) contacts ATP.

In terms of assembly, homodimer.

The enzyme catalyses XMP + L-glutamine + ATP + H2O = GMP + L-glutamate + AMP + diphosphate + 2 H(+). It functions in the pathway purine metabolism; GMP biosynthesis; GMP from XMP (L-Gln route): step 1/1. Functionally, catalyzes the synthesis of GMP from XMP. This chain is GMP synthase [glutamine-hydrolyzing] (guaA), found in Thermotoga maritima (strain ATCC 43589 / DSM 3109 / JCM 10099 / NBRC 100826 / MSB8).